Here is a 1017-residue protein sequence, read N- to C-terminus: EMILIN-1 (1017 aa).

Residues 1 to 21 form the signal peptide; sequence MAPRALWSCYLCCLLTIATEA. Residues 56–133 enclose the EMI domain; the sequence is HRNWCAYVVT…QGYGGDDCGE (78 aa). 3 disulfides stabilise this stretch: Cys-60–Cys-123, Cys-87–Cys-94, and Cys-122–Cys-131. Disordered stretches follow at residues 134–180 and 259–289; these read GPAS…SEKV and ELGH…GPSE. Residues 154-167 show a composition bias toward low complexity; it reads RPNLSGSSAGSHLS. An N-linked (GlcNAc...) asparagine glycan is attached at Asn-156. Coiled coils occupy residues 171 to 211, 237 to 266, and 310 to 374; these read GEGP…LAED, ETLS…LNNH, and LDGF…DVVT. Residues 383–403 form a disordered region; it reads RRGSELGGAAGQGGHPPGYTS. Gly residues predominate over residues 387–398; it reads ELGGAAGQGGHP. Residues Asn-416, Asn-456, Asn-562, and Asn-659 are each glycosylated (N-linked (GlcNAc...) asparagine). Positions 519–573 form a coiled coil; that stretch reads LHEAEAAGEAQQAVLEGLQGLLSRLRERMDAQEETAAEILLRLNLTAAQLSQLEG. The stretch at 676-697 forms a coiled coil; that stretch reads LADLGATKDSIISEINRLQQEA. Residues Asn-767 and Asn-795 are each glycosylated (N-linked (GlcNAc...) asparagine). Residues 789 to 809 adopt a coiled-coil conformation; it reads RRLGALNNSLLLLEDRLQQLS. Residues 811–820 show a composition bias toward low complexity; sequence KDFTGPSGKA. Residues 811–866 are disordered; that stretch reads KDFTGPSGKAGPPGPPGLQGPSGPAGPPGPPGKDGQQGAIGPPGPQGEQGAEGAPA. Positions 815 to 865 constitute a Collagen-like domain; it reads GPSGKAGPPGPPGLQGPSGPAGPPGPPGKDGQQGAIGPPGPQGEQGAEGAP. Positions 822 to 841 are enriched in pro residues; sequence PPGPPGLQGPSGPAGPPGPP. Low complexity predominate over residues 843–866; the sequence is KDGQQGAIGPPGPQGEQGAEGAPA. A C1q domain is found at 867–1014; sequence APVPRVAFSA…GALLYEDTEL (148 aa).

In terms of assembly, homotrimer associated through a moderately stable interaction of the C-terminal globular C1q domains, allowing the nucleation of the triple helix and then a further quaternary assembly to higher-order polymers via intermolecular disulfide bonds. Interacts with EMILIN2. Interacts with EFEMP2; this interaction promotes the incorporation of EFEMP2 into the extracellular matrix.

The protein localises to the secreted. It is found in the extracellular space. The protein resides in the extracellular matrix. Functionally, involved in elastic and collagen fibers formation. It is required for EFEMP2 deposition into the extracellular matrix, and collagen network assembly and cross-linking via protein-lysine 6-oxidase/LOX activity. May be responsible for anchoring smooth muscle cells to elastic fibers, and may be involved the processes that regulate vessel assembly. Has cell adhesive capacity. May have a function in placenta formation and initial organogenesis and a later role in interstitial connective tissue. In Mus musculus (Mouse), this protein is EMILIN-1 (Emilin1).